A 134-amino-acid polypeptide reads, in one-letter code: MAQGRRVERVAALIRKETSELLINGIRDERVHKGMVSITSVEVAGDLQHCKIFVSIFGEPNDQNEVMEGLEAASGFLRGELGRRLQMRRAPEVKFQLDRGLEKGTSVLGLLNQLEDQRQERGEIPPGSDELQPD.

The tract at residues 115–134 (EDQRQERGEIPPGSDELQPD) is disordered.

This sequence belongs to the RbfA family. As to quaternary structure, monomer. Binds 30S ribosomal subunits, but not 50S ribosomal subunits or 70S ribosomes.

It localises to the cytoplasm. Functionally, one of several proteins that assist in the late maturation steps of the functional core of the 30S ribosomal subunit. Associates with free 30S ribosomal subunits (but not with 30S subunits that are part of 70S ribosomes or polysomes). Required for efficient processing of 16S rRNA. May interact with the 5'-terminal helix region of 16S rRNA. This chain is Ribosome-binding factor A, found in Synechococcus sp. (strain CC9902).